The following is a 150-amino-acid chain: Histone deacetylase complex subunit SAP18 (150 aa).

This sequence belongs to the SAP18 family. In terms of assembly, forms a complex with SIN3 and histone deacetylase. Interacts with the N-terminal residues of TRL. Interacts with BCD; in vitro and yeast cells.

It is found in the nucleus. Its subcellular location is the cytoplasm. Involved in the tethering of the SIN3 complex to core histone proteins. Interacts with bicoid (bcd) to repress transcription of bicoid target genes in the anterior tip of the embryo; a process known as retraction. Interacts with Trl and binds to Polycomb response elements at the bithorax complex. May contribute to the regulation of other homeotic gene expressions. This chain is Histone deacetylase complex subunit SAP18 (Bin1), found in Drosophila melanogaster (Fruit fly).